The following is a 314-amino-acid chain: MASPRRSEADLASPARGPGSGPPSPPHPGPDSARPLSRITSAAASPPPPGQRTAEPPTTISIPRTLWRLSIPLYITHPSLPNTPFITSLPRVSYLSLLLPRIRAFLPPSIPAPTSFHHEGIALRALPLGLLVDLYQPTLPWRLTVDQGDDWHVGDTFLNGVKEADFVRNGHAKQIMGMSKADTTALWNAVRDADYPAWARINARLLNPSTPIKHVPLRIYIPSSGGGGAGGATPAGSFRVMQTLVPPRTANRIPQTLGPTLRDLLPVLFPSSRDPVLANVVLHGAPVPFSAPLEGLMREAAYPDGWLCLTVVPL.

Residues 1–59 form a disordered region; the sequence is MASPRRSEADLASPARGPGSGPPSPPHPGPDSARPLSRITSAAASPPPPGQRTAEPPTT. Positions 20–29 are enriched in pro residues; sequence SGPPSPPHPG. A Glycyl lysine isopeptide (Lys-Gly) (interchain with G-Cter in ATG12) cross-link involves residue Lys162.

The protein belongs to the ATG5 family. As to quaternary structure, conjugated with ATG12. Conjugated to ATG12; which is essential for autophagy.

The protein localises to the preautophagosomal structure membrane. Functionally, involved in cytoplasm to vacuole transport (Cvt) and autophagic vesicle formation. Autophagy is essential for maintenance of amino acid levels and protein synthesis under nitrogen starvation. Required for selective autophagic degradation of the nucleus (nucleophagy). Also required for mitophagy, which eliminates defective or superfluous mitochondria in order to fulfill cellular energy requirements and prevent excess ROS production. Conjugation with ATG12, through a ubiquitin-like conjugating system involving ATG7 as an E1-like activating enzyme and ATG10 as an E2-like conjugating enzyme, is essential for its function. The ATG12-ATG5 conjugate acts as an E3-like enzyme which is required for lipidation of ATG8 and ATG8 association to the vesicle membranes. Required for cell differentiation and pathogenesis. In Pyricularia oryzae (strain 70-15 / ATCC MYA-4617 / FGSC 8958) (Rice blast fungus), this protein is Autophagy protein 5 (ATG5).